The sequence spans 1499 residues: Ubiquitinating/deubiquitinating enzyme SdeA (1499 aa).

The segment at methionine 1 to lysine 193 is deubiquitinase. Catalysis depends on for deubiquitinase activity residues histidine 64 and aspartate 80. Catalysis depends on cysteine 118, which acts as the Nucleophile; for deubiquitinase activity. The segment at proline 760 to threonine 1000 is mono-ADP-ribosyltransferase. Residue arginine 766–glutamate 772 coordinates NAD(+). The residue at position 860 (glutamate 860) is a 5-glutamyl glutamate. Glutamate 862 lines the NAD(+) pocket. Residues lysine 1059–leucine 1181 adopt a coiled-coil conformation.

Belongs to the SidE family. As to quaternary structure, interacts with IcmS. Is able to ubiquitinate itself, but this modification is not required to ubiquitinate Rab33b. Post-translationally, glutamylated at Glu-860 by SidJ; glutamylation inhibits SdeA activity to catalyze the production of ADP-ribosylated ubiquitin.

The protein resides in the secreted. Its subcellular location is the host cell. It carries out the reaction L-arginyl-[protein] + NAD(+) = N(omega)-(ADP-D-ribosyl)-L-arginyl-[protein] + nicotinamide + H(+). With respect to regulation, ubiquitination catalyzed by SdeA is insensitive to the cysteine alkylation agent maleimide, suggesting that a cysteine conjugation of ubiquitin does not form during the reaction. Secreted effector that interferes with the host cell ubiquitin pathway and is required for intracellular bacterial replication. Catalyzes the ubiquitination of several mammalian Rab proteins (Rab33b, Rab1, Rab6a and Rab30) during L.pneumophila infection, without engaging the standard cellular enzyme cascade (E1 and E2). Transfers an ADP-ribose moiety from NAD to the 'Arg-42' residue of ubiquitin in a reaction that releases nicotinamide. The modified ubiquitin is subsequently transferred to serine residues of the substrate protein via a phosphoribose linker that results in the release of AMP. Cannot ubiquitinate the endosomal Rab5 or the cytoskeletal small GTPase Rac1. Also acts as a deubiquitinase (DUB), catalyzing the cleavage of three of the most abundant polyubiquitin chains ('Lys-11', 'Lys-48' and 'Lys-63') with a distinct preference for 'Lys-63' linkages; is thus able to efficiently remove 'Lys-63'-linked polyubiquitin chains from the phagosomal surface. Is also able to remove NEDD8 from neddylated proteins, but is unable to recognize SUMO. The DUB activity of SdeA is important for regulating the dynamics of ubiquitin association with the bacterial phagosome, but is dispensable for its role in intracellular bacterial replication. The sequence is that of Ubiquitinating/deubiquitinating enzyme SdeA from Legionella pneumophila subsp. pneumophila (strain Philadelphia 1 / ATCC 33152 / DSM 7513).